The following is a 220-amino-acid chain: Cytidylate kinase (220 aa).

11 to 19 is a binding site for ATP; that stretch reads GPTASGKGT.

Belongs to the cytidylate kinase family. Type 1 subfamily.

It is found in the cytoplasm. The enzyme catalyses CMP + ATP = CDP + ADP. It catalyses the reaction dCMP + ATP = dCDP + ADP. This is Cytidylate kinase from Polynucleobacter asymbioticus (strain DSM 18221 / CIP 109841 / QLW-P1DMWA-1) (Polynucleobacter necessarius subsp. asymbioticus).